An 83-amino-acid polypeptide reads, in one-letter code: UPF0457 protein YnzG (83 aa).

Belongs to the UPF0457 family.

The sequence is that of UPF0457 protein YnzG (ynzG) from Bacillus subtilis (strain 168).